The primary structure comprises 102 residues: uncharacterized protein (102 aa).

Residues 36 to 55 (IISLLAIFIKMCLWLWKQFL) form a helical membrane-spanning segment.

Its subcellular location is the membrane. This is an uncharacterized protein from Homo sapiens (Human).